Reading from the N-terminus, the 196-residue chain is Acyl-homoserine-lactone synthase (196 aa).

It belongs to the autoinducer synthase family.

The enzyme catalyses a fatty acyl-[ACP] + S-adenosyl-L-methionine = an N-acyl-L-homoserine lactone + S-methyl-5'-thioadenosine + holo-[ACP] + H(+). Its function is as follows. Required for the synthesis of a yet unknown N-aceyl-homoserine lactone (N-aceyl-HSL), an autoinducer molecule which binds to PhzR and thus regulates phenazine production. This Pseudomonas fluorescens protein is Acyl-homoserine-lactone synthase (phzI).